A 226-amino-acid polypeptide reads, in one-letter code: Small ribosomal subunit protein uS3 (226 aa).

Residues Val-39 to Arg-107 enclose the KH type-2 domain.

Belongs to the universal ribosomal protein uS3 family. In terms of assembly, part of the 30S ribosomal subunit. Forms a tight complex with proteins S10 and S14.

In terms of biological role, binds the lower part of the 30S subunit head. Binds mRNA in the 70S ribosome, positioning it for translation. This is Small ribosomal subunit protein uS3 from Alkalilimnicola ehrlichii (strain ATCC BAA-1101 / DSM 17681 / MLHE-1).